The following is a 530-amino-acid chain: Arginine--tRNA ligase (530 aa).

The 'HIGH' region signature appears at 113–123 (ANPTGPLHIGH).

This sequence belongs to the class-I aminoacyl-tRNA synthetase family. In terms of assembly, monomer.

The protein resides in the cytoplasm. The enzyme catalyses tRNA(Arg) + L-arginine + ATP = L-arginyl-tRNA(Arg) + AMP + diphosphate. This is Arginine--tRNA ligase from Campylobacter jejuni subsp. jejuni serotype O:23/36 (strain 81-176).